The sequence spans 399 residues: Stearoyl-[acyl-carrier-protein] 9-desaturase, seed specific, chloroplastic (399 aa).

The transit peptide at 1 to 34 (MALKFNPLVSQPYKLASSARPPVSTFRSPKFLCL) directs the protein to the chloroplast. Fe cation-binding residues include Glu-141, Glu-179, His-182, Glu-232, Glu-265, and His-268.

The protein belongs to the fatty acid desaturase type 2 family. In terms of assembly, homodimer. The cofactor is Fe(2+). Developing seeds.

It localises to the plastid. It is found in the chloroplast. The catalysed reaction is octadecanoyl-[ACP] + 2 reduced [2Fe-2S]-[ferredoxin] + O2 + 2 H(+) = (9Z)-octadecenoyl-[ACP] + 2 oxidized [2Fe-2S]-[ferredoxin] + 2 H2O. It participates in lipid metabolism; fatty acid metabolism. Converts stearoyl-ACP to oleoyl-ACP by introduction of a cis double bond between carbons Delta(9) and Delta(10) of the acyl chain. In Brassica napus (Rape), this protein is Stearoyl-[acyl-carrier-protein] 9-desaturase, seed specific, chloroplastic.